The sequence spans 277 residues: F-actin-capping protein subunit beta isoforms 1 and 2 (277 aa).

S2 carries the N-acetylserine modification.

The protein belongs to the F-actin-capping protein beta subunit family. In terms of assembly, component of the F-actin capping complex, composed of a heterodimer of an alpha and a beta subunit. Component of the WASH complex. Component of the F-actin capping complex, composed of a heterodimer of an alpha and a beta subunit. Subunit of dynactin, a multiprotein complex part of a tripartite complex with dynein and a adapter, such as BICDL1, BICD2 or HOOK3. The dynactin complex is built around ACTR1A/ACTB filament and consists of an actin-related filament composed of a shoulder domain, a pointed end and a barbed end. Its length is defined by its flexible shoulder domain. Isoform 1 is detected in pectoral muscle, cardiac muscle and gizzard. Isoform 2 is detected in brain and liver (at protein level). Isoform 2 is the predominant isoform of nonmuscle tissues and isoform 1 is the predominant isoform of muscle tissues.

Its subcellular location is the cytoplasm. The protein resides in the myofibril. It is found in the sarcomere. It localises to the z line. The protein localises to the i band. Its subcellular location is the cytoskeleton. In terms of biological role, F-actin-capping proteins bind in a Ca(2+)-independent manner to the fast growing ends of actin filaments (barbed end) thereby blocking the exchange of subunits at these ends. Unlike other capping proteins (such as gelsolin and severin), these proteins do not sever actin filaments. May play a role in the regulation of cell morphology and cytoskeletal organization. Its function is as follows. Forms, with CAPZB, the barbed end of the fast growing ends of actin filaments in the dynactin complex and stabilizes dynactin structure. The dynactin multiprotein complex activates the molecular motor dynein for ultra-processive transport along microtubules. The sequence is that of F-actin-capping protein subunit beta isoforms 1 and 2 (CAPZB) from Gallus gallus (Chicken).